Reading from the N-terminus, the 454-residue chain is Neuraminidase (454 aa).

Residues 1 to 13 (VIGIVSLMLQIGN) form a helical membrane-spanning segment. The Virion surface portion of the chain corresponds to 14–454 (IISIWVSHSI…GAELPFTIDK (441 aa)). The interval 21–75 (HSIQTGNQHQAEPCIQSIITYENNTWVNQTYVNISNTNFLTEKTVASVTLAGNSS) is hypervariable stalk region. N-linked (GlcNAc...) asparagine; by host glycans are attached at residues Asn43, Asn48, Asn53, and Asn73. The interval 76-454 (LCPISGWAVY…GAELPFTIDK (379 aa)) is head of neuraminidase. 8 cysteine pairs are disulfide-bonded: Cys77/Cys402, Cys109/Cys114, Cys169/Cys216, Cys218/Cys223, Cys264/Cys277, Cys266/Cys275, Cys303/Cys320, and Cys406/Cys431. Substrate is bound at residue Arg103. A glycan (N-linked (GlcNAc...) asparagine; by host) is linked at Asn131. Asp136 acts as the Proton donor/acceptor in catalysis. Substrate is bound at residue Arg137. Residue Asn220 is glycosylated (N-linked (GlcNAc...) asparagine; by host). Residue 262–263 (EE) participates in substrate binding. Arg278 lines the substrate pocket. Ca(2+) contacts are provided by Asp279, Gly283, and Asp309. A substrate-binding site is contributed by Arg353. A glycan (N-linked (GlcNAc...) asparagine; by host) is linked at Asn371. The active-site Nucleophile is Tyr387.

This sequence belongs to the glycosyl hydrolase 34 family. As to quaternary structure, homotetramer. Ca(2+) is required as a cofactor. Post-translationally, N-glycosylated.

The protein resides in the virion membrane. It localises to the host apical cell membrane. The catalysed reaction is Hydrolysis of alpha-(2-&gt;3)-, alpha-(2-&gt;6)-, alpha-(2-&gt;8)- glycosidic linkages of terminal sialic acid residues in oligosaccharides, glycoproteins, glycolipids, colominic acid and synthetic substrates.. With respect to regulation, inhibited by the neuraminidase inhibitors zanamivir (Relenza) and oseltamivir (Tamiflu). These drugs interfere with the release of progeny virus from infected cells and are effective against all influenza strains. Resistance to neuraminidase inhibitors is quite rare. Its function is as follows. Catalyzes the removal of terminal sialic acid residues from viral and cellular glycoconjugates. Cleaves off the terminal sialic acids on the glycosylated HA during virus budding to facilitate virus release. Additionally helps virus spread through the circulation by further removing sialic acids from the cell surface. These cleavages prevent self-aggregation and ensure the efficient spread of the progeny virus from cell to cell. Otherwise, infection would be limited to one round of replication. Described as a receptor-destroying enzyme because it cleaves a terminal sialic acid from the cellular receptors. May facilitate viral invasion of the upper airways by cleaving the sialic acid moieties on the mucin of the airway epithelial cells. Likely to plays a role in the budding process through its association with lipid rafts during intracellular transport. May additionally display a raft-association independent effect on budding. Plays a role in the determination of host range restriction on replication and virulence. Sialidase activity in late endosome/lysosome traffic seems to enhance virus replication. The protein is Neuraminidase of Influenza A virus (strain A/Teal/China/2978.1/2002 H5N1 genotype W).